The primary structure comprises 633 residues: Probable potassium transport system protein Kup 2 (633 aa).

12 helical membrane-spanning segments follow: residues 18 to 38, 61 to 81, 107 to 127, 143 to 163, 176 to 196, 211 to 231, 255 to 275, 293 to 313, 345 to 365, 371 to 391, 402 to 422, and 429 to 449; these read FVGL…TSPL, LISL…VLFL, VPVL…DAMI, ITPA…IVLF, FFGP…VIHI, ALSF…AVFL, WFVL…ALVL, ALLP…QAVI, IYVP…IFSF, LATA…MLAF, FMLA…FLAA, and DGGW…WTWT.

This sequence belongs to the HAK/KUP transporter (TC 2.A.72) family.

It localises to the cell inner membrane. It carries out the reaction K(+)(in) + H(+)(in) = K(+)(out) + H(+)(out). In terms of biological role, transport of potassium into the cell. Likely operates as a K(+):H(+) symporter. This chain is Probable potassium transport system protein Kup 2, found in Rhizobium etli (strain ATCC 51251 / DSM 11541 / JCM 21823 / NBRC 15573 / CFN 42).